The sequence spans 152 residues: D-aminoacyl-tRNA deacylase (152 aa).

A Gly-cisPro motif, important for rejection of L-amino acids motif is present at residues 137–138; that stretch reads GP.

The protein belongs to the DTD family. Homodimer.

The protein localises to the cytoplasm. The enzyme catalyses glycyl-tRNA(Ala) + H2O = tRNA(Ala) + glycine + H(+). It catalyses the reaction a D-aminoacyl-tRNA + H2O = a tRNA + a D-alpha-amino acid + H(+). Its function is as follows. An aminoacyl-tRNA editing enzyme that deacylates mischarged D-aminoacyl-tRNAs. Also deacylates mischarged glycyl-tRNA(Ala), protecting cells against glycine mischarging by AlaRS. Acts via tRNA-based rather than protein-based catalysis; rejects L-amino acids rather than detecting D-amino acids in the active site. By recycling D-aminoacyl-tRNA to D-amino acids and free tRNA molecules, this enzyme counteracts the toxicity associated with the formation of D-aminoacyl-tRNA entities in vivo and helps enforce protein L-homochirality. The sequence is that of D-aminoacyl-tRNA deacylase from Methylibium petroleiphilum (strain ATCC BAA-1232 / LMG 22953 / PM1).